A 332-amino-acid chain; its full sequence is Biotin synthase (332 aa).

The region spanning 46–275 is the Radical SAM core domain; that stretch reads SDIQRASLLS…RARVRLSAGR (230 aa). [4Fe-4S] cluster contacts are provided by C61, C65, and C68. [2Fe-2S] cluster contacts are provided by C106, C138, C198, and R270.

It belongs to the radical SAM superfamily. Biotin synthase family. As to quaternary structure, homodimer. [4Fe-4S] cluster serves as cofactor. Requires [2Fe-2S] cluster as cofactor.

It carries out the reaction (4R,5S)-dethiobiotin + (sulfur carrier)-SH + 2 reduced [2Fe-2S]-[ferredoxin] + 2 S-adenosyl-L-methionine = (sulfur carrier)-H + biotin + 2 5'-deoxyadenosine + 2 L-methionine + 2 oxidized [2Fe-2S]-[ferredoxin]. The protein operates within cofactor biosynthesis; biotin biosynthesis; biotin from 7,8-diaminononanoate: step 2/2. In terms of biological role, catalyzes the conversion of dethiobiotin (DTB) to biotin by the insertion of a sulfur atom into dethiobiotin via a radical-based mechanism. The chain is Biotin synthase from Methylobacterium sp. (strain 4-46).